The chain runs to 103 residues: Defensin-like protein 268 (103 aa).

Positions 1-24 are cleaved as a signal peptide; that stretch reads MARLIFHFVFALILAAYLLSVTDA. 4 disulfides stabilise this stretch: C44–C103, C68–C87, C74–C98, and C78–C100.

This sequence belongs to the DEFL family.

The protein resides in the secreted. The polypeptide is Defensin-like protein 268 (Arabidopsis thaliana (Mouse-ear cress)).